The primary structure comprises 270 residues: Fibroblast growth factor 5 (270 aa).

The first 20 residues, 1-20 (MSLSFLLLLFLSHLILSAWA), serve as a signal peptide directing secretion. The segment at 26–83 (LAPKGQPGPAATGRNPAGASSSRSSRGTTSSSSSSVSSSHSASLGNQGSGLEQSSFQW) is disordered. The segment covering 43–68 (GASSSRSSRGTTSSSSSSVSSSHSAS) has biased composition (low complexity). The span at 69–83 (LGNQGSGLEQSSFQW) shows a compositional bias: polar residues. N112 carries N-linked (GlcNAc...) asparagine glycosylation. The interval 236-257 (PEKKKPPSPVKPKVPLSAPRKS) is disordered.

The protein belongs to the heparin-binding growth factors family. In terms of assembly, interacts with FGFR1 and FGFR2. Affinity between fibroblast growth factors (FGFs) and their receptors is increased by heparan sulfate glycosaminoglycans that function as coreceptors. In terms of tissue distribution, expressed in skin.

The protein resides in the secreted. Its function is as follows. Plays an important role in the regulation of cell proliferation and cell differentiation. Required for normal regulation of the hair growth cycle. Functions as an inhibitor of hair elongation by promoting progression from anagen, the growth phase of the hair follicle, into catagen the apoptosis-induced regression phase. This Felis catus (Cat) protein is Fibroblast growth factor 5 (FGF5).